The chain runs to 881 residues: Mechanosensitive ion channel protein 5 (881 aa).

2 stretches are compositionally biased toward basic and acidic residues: residues 1-12 (MAAVDSTDRRDF) and 48-59 (DGEKGKNDKKGD). The disordered stretch occupies residues 1 to 248 (MAAVDSTDRR…RNGFEEEEEE (248 aa)). A compositionally biased stretch (polar residues) spans 115–145 (ELQSNTPPRPATASNTPRRGLTTISESSSPV). Over residues 169-179 (EEGRNRDEAEV) the composition is skewed to basic and acidic residues. Position 231 is a phosphoserine (serine 231). Transmembrane regions (helical) follow at residues 265–285 (LSFWVFLEWISLVLIVTSLVC), 309–329 (VLVLICGRLVSSWIVRIIVFL), 349–369 (KSVQNCLWLGLVLLAWHFLFD), 387–407 (VLVCLLVALIIWLVKTILVKV), 642–662 (IINVVIGIIIIIIWLLILGIA), and 677–697 (VAFVFGNSCKTIFEAIIFLFV). Positions 861-881 (PTANPTSSDRIPPSWMQQRGP) are disordered. Residues 864-881 (NPTSSDRIPPSWMQQRGP) show a composition bias toward polar residues.

The protein belongs to the MscS (TC 1.A.23) family.

It localises to the membrane. In terms of biological role, mechanosensitive channel that opens in response to stretch forces in the membrane lipid bilayer. This chain is Mechanosensitive ion channel protein 5 (MSL5), found in Arabidopsis thaliana (Mouse-ear cress).